Reading from the N-terminus, the 438-residue chain is GTPase Der (438 aa).

2 EngA-type G domains span residues 2-164 (HKVA…PEDD) and 173-343 (IRIS…EKWQ). GTP is bound by residues 8–15 (GRPNVGKS), 55–59 (DTGGL), 116–119 (NKID), 179–186 (GRPNVGKS), 226–230 (DTAGI), and 288–291 (NKWD). The KH-like domain occupies 344–428 (SRIGTSELNR…PVRLKWKEKG (85 aa)).

The protein belongs to the TRAFAC class TrmE-Era-EngA-EngB-Septin-like GTPase superfamily. EngA (Der) GTPase family. Associates with the 50S ribosomal subunit.

GTPase that plays an essential role in the late steps of ribosome biogenesis. The chain is GTPase Der from Deinococcus radiodurans (strain ATCC 13939 / DSM 20539 / JCM 16871 / CCUG 27074 / LMG 4051 / NBRC 15346 / NCIMB 9279 / VKM B-1422 / R1).